The primary structure comprises 789 residues: Spermatogenesis-associated protein 20 (789 aa).

The segment covering 1-19 has biased composition (basic residues); it reads MSHHSPPPPKHKGEHKGHG. Positions 1–65 are disordered; the sequence is MSHHSPPPPK…CPPPAPQKTA (65 aa). A phosphoserine mark is found at S5 and S652.

As to expression, testis-specific and age-dependent (at protein level). Highly expressed. Expressed in round spermatids located in the inner half-layer of the seminiferous epithelium as well as in early elongated spermatids having cytoplasmic protrusions into the tubular lumen.

The protein resides in the secreted. Its function is as follows. May play a role in fertility regulation. This chain is Spermatogenesis-associated protein 20 (Spata20), found in Rattus norvegicus (Rat).